The sequence spans 288 residues: Oxaloacetate decarboxylase (288 aa).

Residue Ser-47 participates in substrate binding. Asp-85 is a Mg(2+) binding site. Substrate is bound by residues Arg-156 and His-232.

Belongs to the isocitrate lyase/PEP mutase superfamily. Oxaloacetate decarboxylase family. In terms of assembly, homotetramer; dimer of dimers. It depends on Mg(2+) as a cofactor.

The catalysed reaction is oxaloacetate + H(+) = pyruvate + CO2. Its function is as follows. Catalyzes the decarboxylation of oxaloacetate into pyruvate. Seems to play a role in maintaining cellular concentrations of bicarbonate and pyruvate. The polypeptide is Oxaloacetate decarboxylase (Rhodopseudomonas palustris (strain ATCC BAA-98 / CGA009)).